Reading from the N-terminus, the 143-residue chain is Histone H2AX (143 aa).

The interval 1 to 22 (MSGRGKTGGKARAKAKSRSSRA) is disordered. Residue Ser-2 is modified to N-acetylserine. Ser-2 bears the Phosphoserine mark. N6-acetyllysine is present on residues Lys-6 and Lys-10. Over residues 7-19 (TGGKARAKAKSRS) the composition is skewed to basic residues. Lys-10 carries the post-translational modification N6-lactoyllysine; alternate. Residues Lys-14 and Lys-16 each participate in a glycyl lysine isopeptide (Lys-Gly) (interchain with G-Cter in ubiquitin) cross-link. At Lys-37 the chain carries N6-acetyllysine. Lys-120 is covalently cross-linked (Glycyl lysine isopeptide (Lys-Gly) (interchain with G-Cter in ubiquitin)). A disordered region spans residues 121–143 (TSATVGPKAPSGGKKATQASQEY). Ser-122 is modified (phosphoserine). Residues Lys-128 and Lys-135 each participate in a glycyl lysine isopeptide (Lys-Gly) (interchain with G-Cter in SUMO2) cross-link. Ser-140 bears the Phosphoserine; by ATM, ATR and PRKDC mark. A [ST]-Q motif motif is present at residues 140–141 (SQ). Residue Tyr-143 is modified to Phosphotyrosine; by WSTF.

Belongs to the histone H2A family. In terms of assembly, the nucleosome is a histone octamer containing two molecules each of H2A, H2B, H3 and H4 assembled in one H3-H4 heterotetramer and two H2A-H2B heterodimers. The octamer wraps approximately 147 bp of DNA. Interacts with numerous proteins required for DNA damage signaling and repair when phosphorylated on Ser-140. These include MDC1, TP53BP1, BRCA1 and the MRN complex, composed of MRE11, RAD50, and NBN. Interaction with the MRN complex is mediated at least in part by NBN. Also interacts with DHX9/NDHII when phosphorylated on Ser-140 and MCPH1 when phosphorylated at Ser-140 or Tyr-143. Interacts with ARRB2; the interaction is detected in the nucleus upon OR1D2 stimulation. Interacts with WRAP53/TCAB1. Interacts with HDGFL2. Interacts with DNA damage up-regulated protein DDUP. Forms a complex with DDUP and RAD18 following DDUP phosphorylation. (Microbial infection) Interacts with Epstein-Barr virus protein EBNA6. Post-translationally, phosphorylated by VRK1. Phosphorylated on Ser-140 (to form gamma-H2AX or H2AX139ph) in response to DNA double strand breaks (DSBs) generated by exogenous genotoxic agents and by stalled replication forks, and may also occur during meiotic recombination events and immunoglobulin class switching in lymphocytes. Phosphorylation can extend up to several thousand nucleosomes from the actual site of the DSB and may mark the surrounding chromatin for recruitment of proteins required for DNA damage signaling and repair. Widespread phosphorylation may also serve to amplify the damage signal or aid repair of persistent lesions. Phosphorylation of Ser-140 (H2AX139ph) in response to ionizing radiation is mediated by both ATM and PRKDC while defects in DNA replication induce Ser-140 phosphorylation (H2AX139ph) subsequent to activation of ATR and PRKDC. Dephosphorylation of Ser-140 by PP2A is required for DNA DSB repair. In meiosis, Ser-140 phosphorylation (H2AX139ph) may occur at synaptonemal complexes during leptotene as an ATM-dependent response to the formation of programmed DSBs by SPO11. Ser-140 phosphorylation (H2AX139ph) may subsequently occurs at unsynapsed regions of both autosomes and the XY bivalent during zygotene, downstream of ATR and BRCA1 activation. Ser-140 phosphorylation (H2AX139ph) may also be required for transcriptional repression of unsynapsed chromatin and meiotic sex chromosome inactivation (MSCI), whereby the X and Y chromosomes condense in pachytene to form the heterochromatic XY-body. During immunoglobulin class switch recombination in lymphocytes, Ser-140 phosphorylation (H2AX139ph) may occur at sites of DNA-recombination subsequent to activation of the activation-induced cytidine deaminase AICDA. Phosphorylation at Tyr-143 (H2AXY142ph) by BAZ1B/WSTF determines the relative recruitment of either DNA repair or pro-apoptotic factors. Phosphorylation at Tyr-143 (H2AXY142ph) favors the recruitment of APBB1/FE65 and pro-apoptosis factors such as MAPK8/JNK1, triggering apoptosis. In contrast, dephosphorylation of Tyr-143 by EYA proteins (EYA1, EYA2, EYA3 or EYA4) favors the recruitment of MDC1-containing DNA repair complexes to the tail of phosphorylated Ser-140 (H2AX139ph). In terms of processing, monoubiquitination of Lys-120 (H2AXK119ub) by RING1 and RNF2/RING2 complex gives a specific tag for epigenetic transcriptional repression. Following DNA double-strand breaks (DSBs), it is ubiquitinated through 'Lys-63' linkage of ubiquitin moieties by the E2 ligase UBE2N and the E3 ligases RNF8 and RNF168, leading to the recruitment of repair proteins to sites of DNA damage. Ubiquitination at Lys-14 and Lys-16 (H2AK13Ub and H2AK15Ub, respectively) in response to DNA damage is initiated by RNF168 that mediates monoubiquitination at these 2 sites, and 'Lys-63'-linked ubiquitin are then conjugated to monoubiquitin; RNF8 is able to extend 'Lys-63'-linked ubiquitin chains in vitro. H2AK119Ub and ionizing radiation-induced 'Lys-63'-linked ubiquitination (H2AK13Ub and H2AK15Ub) are distinct events. Acetylation at Lys-6 (H2AXK5ac) by KAT5 component of the NuA4 histone acetyltransferase complex promotes NBN/NBS1 assembly at the sites of DNA damage. Acetylation at Lys-37 increases in S and G2 phases. This modification has been proposed to play a role in DNA double-strand break repair.

The protein resides in the nucleus. The protein localises to the chromosome. Its function is as follows. Variant histone H2A which replaces conventional H2A in a subset of nucleosomes. Nucleosomes wrap and compact DNA into chromatin, limiting DNA accessibility to the cellular machineries which require DNA as a template. Histones thereby play a central role in transcription regulation, DNA repair, DNA replication and chromosomal stability. DNA accessibility is regulated via a complex set of post-translational modifications of histones, also called histone code, and nucleosome remodeling. Required for checkpoint-mediated arrest of cell cycle progression in response to low doses of ionizing radiation and for efficient repair of DNA double strand breaks (DSBs) specifically when modified by C-terminal phosphorylation. This chain is Histone H2AX, found in Homo sapiens (Human).